The primary structure comprises 55 residues: Large ribosomal subunit protein bL33 (55 aa).

The protein belongs to the bacterial ribosomal protein bL33 family.

The polypeptide is Large ribosomal subunit protein bL33 (Micrococcus luteus (strain ATCC 4698 / DSM 20030 / JCM 1464 / CCM 169 / CCUG 5858 / IAM 1056 / NBRC 3333 / NCIMB 9278 / NCTC 2665 / VKM Ac-2230) (Micrococcus lysodeikticus)).